The sequence spans 377 residues: Presenilin-associated rhomboid-like protein, mitochondrial (377 aa).

The transit peptide at 1–50 (MALYSWVQRGWRCGQTWAPLLGGGYRELSATQARQLLGRRFNLLLQQKCG) directs the protein to the mitochondrion. The Mitochondrial matrix segment spans residues 51–95 (FRKAPRKVEPRRSDTGSSGEAYKRSALIPPLEETVFYPSPYPVRT). Phosphoserine occurs at positions 63 and 68. A helical transmembrane segment spans residues 96 to 116 (LLKPFFFTVGFTGCAFGSAAI). At 117–165 (WQYESLKSRVQSYFDGIKADWLDSIRPQKEGNLRKEINKWWNSLSDGQR) the chain is on the mitochondrial intermembrane side. Residues 166–186 (TVTGIIAANALVFCLWRVPSL) traverse the membrane as a helical segment. Residues 187–214 (HRTMIRYFTSNPASKVLCSPMLLSTFSH) are Mitochondrial matrix-facing. The chain crosses the membrane as a helical span at residues 215–235 (FSLFHMAANMYVLWSFSTSIV). The Mitochondrial intermembrane portion of the chain corresponds to 236–242 (NILGQEQ). The chain crosses the membrane as a helical span at residues 243–263 (FVAVYLSAGVISNFVSYVCKV). The Mitochondrial matrix segment spans residues 264-268 (ATGRY). Residues 269–289 (GPSLGASGAIMTVLAAVCTKI) traverse the membrane as a helical segment. S275 acts as the Nucleophile in catalysis. At 290–293 (PEGR) the chain is on the mitochondrial intermembrane side. Residues 294–314 (LAIIFLPVFTFTAGNALKAII) traverse the membrane as a helical segment. Residues 315 to 331 (AMDTAGMILGWKFFDHA) lie on the Mitochondrial matrix side of the membrane. Residues 332-352 (AHLGGALFGIWYITYGHELIW) traverse the membrane as a helical segment. The active site involves H333. Residues 353 to 377 (KNREPLVKIWHEIRTNGPKKGGGSK) are Mitochondrial intermembrane-facing.

This sequence belongs to the peptidase S54 family. In terms of assembly, interacts with PSEN1 and PSEN2. Binds OPA1. In terms of processing, P-beta is proteolytically processed (beta-cleavage) in a PARL-dependent manner.

The protein localises to the mitochondrion inner membrane. It localises to the nucleus. It catalyses the reaction Cleaves type-1 transmembrane domains using a catalytic dyad composed of serine and histidine that are contributed by different transmembrane domains.. Functionally, required for the control of apoptosis during postnatal growth. Essential for proteolytic processing of an antiapoptotic form of OPA1 which prevents the release of mitochondrial cytochrome c in response to intrinsic apoptotic signals. Required for the maturation of PINK1 into its 52kDa mature form after its cleavage by mitochondrial-processing peptidase (MPP). Promotes cleavage of serine/threonine-protein phosphatase PGAM5 in damaged mitochondria in response to loss of mitochondrial membrane potential. Mediates differential cleavage of PINK1 and PGAM5 depending on the health status of mitochondria, disassociating from PINK1 and associating with PGAM5 in response to mitochondrial membrane potential loss. Required for processing of CLPB into a form with higher protein disaggregase activity by removing an autoinhibitory N-terminal peptide. Promotes processing of DIABLO/SMAC in the mitochondrion which is required for DIABLO apoptotic activity. Also required for cleavage of STARD7 and TTC19. Promotes changes in mitochondria morphology regulated by phosphorylation of P-beta domain. This chain is Presenilin-associated rhomboid-like protein, mitochondrial, found in Rattus norvegicus (Rat).